Here is a 327-residue protein sequence, read N- to C-terminus: Quinone oxidoreductase 1 (327 aa).

Residues 42-46 (FIDTY), Y130, 152-153 (GV), 173-177 (GTAQK), Y192, S216, 238-241 (FGNS), 264-266 (PSL), and R317 contribute to the NADP(+) site.

This sequence belongs to the zinc-containing alcohol dehydrogenase family. Quinone oxidoreductase subfamily. In terms of assembly, homodimer.

It catalyses the reaction 2 a quinone + NADPH + H(+) = 2 a 1,4-benzosemiquinone + NADP(+). The chain is Quinone oxidoreductase 1 (qorA) from Escherichia coli (strain K12).